The following is a 385-amino-acid chain: tRNA-specific 2-thiouridylase MnmA (385 aa).

Residues 29 to 36 (GLSGGVDS) and Leu55 each bind ATP. Cys116 acts as the Nucleophile in catalysis. An intrachain disulfide couples Cys116 to Cys225. Gly141 serves as a coordination point for ATP. Positions 175-177 (KDQ) are interaction with tRNA. The active-site Cysteine persulfide intermediate is Cys225. The segment at 330 to 331 (RY) is interaction with tRNA.

It belongs to the MnmA/TRMU family.

It localises to the cytoplasm. The catalysed reaction is S-sulfanyl-L-cysteinyl-[protein] + uridine(34) in tRNA + AH2 + ATP = 2-thiouridine(34) in tRNA + L-cysteinyl-[protein] + A + AMP + diphosphate + H(+). In terms of biological role, catalyzes the 2-thiolation of uridine at the wobble position (U34) of tRNA, leading to the formation of s(2)U34. The chain is tRNA-specific 2-thiouridylase MnmA from Prochlorococcus marinus (strain MIT 9301).